The primary structure comprises 728 residues: Polyribonucleotide nucleotidyltransferase (728 aa).

Mg(2+) is bound by residues D488 and D494. Residues 555–614 (PRMITMKIHPDKIREVIGKGGSTIQALTKETGTTIDIQEDGTITIASTSTDGMAEAKRRI) enclose the KH domain. The region spanning 624-692 (GKIYNGTVLK…EKGRLRLSLK (69 aa)) is the S1 motif domain. The segment at 702 to 728 (ISPVNAGEAAPAPAPAAAPATPSDQQQ) is disordered. Over residues 710–721 (AAPAPAPAAAPA) the composition is skewed to low complexity.

This sequence belongs to the polyribonucleotide nucleotidyltransferase family. It depends on Mg(2+) as a cofactor.

The protein localises to the cytoplasm. It catalyses the reaction RNA(n+1) + phosphate = RNA(n) + a ribonucleoside 5'-diphosphate. In terms of biological role, involved in mRNA degradation. Catalyzes the phosphorolysis of single-stranded polyribonucleotides processively in the 3'- to 5'-direction. This Cupriavidus pinatubonensis (strain JMP 134 / LMG 1197) (Cupriavidus necator (strain JMP 134)) protein is Polyribonucleotide nucleotidyltransferase.